We begin with the raw amino-acid sequence, 110 residues long: MPPKAAGGKSKQIQASKAAAKGSSGGAGRKKWSKGRSREKLNNAILFDKETYAKLLKEMPTAKVITTAVVSERMKCNGSLARRAIKELLSKGLIKQIIKGHGNGVYTKAQ.

Residues 1–39 (MPPKAAGGKSKQIQASKAAAKGSSGGAGRKKWSKGRSRE) are disordered.

This sequence belongs to the eukaryotic ribosomal protein eS25 family.

In Dictyostelium discoideum (Social amoeba), this protein is Small ribosomal subunit protein eS25 (rps25).